A 158-amino-acid polypeptide reads, in one-letter code: HVA22-like protein f (158 aa).

The next 3 helical transmembrane spans lie at 2-22 (GFII…VMLL), 41-61 (QQWL…LSVW), and 63-83 (VLAW…WLVL).

This sequence belongs to the DP1 family.

The protein resides in the membrane. This Arabidopsis thaliana (Mouse-ear cress) protein is HVA22-like protein f (HVA22F).